We begin with the raw amino-acid sequence, 657 residues long: Histidine ammonia-lyase (657 aa).

The 5-imidazolinone (Ala-Gly) cross-link spans 253-255 (ASG). Ser-254 carries the 2,3-didehydroalanine (Ser) modification. Thr-396 carries the phosphothreonine modification. A Phosphoserine modification is found at Ser-635. Thr-637 is subject to Phosphothreonine. A Phosphoserine modification is found at Ser-648.

Belongs to the PAL/histidase family. In terms of processing, contains an active site 4-methylidene-imidazol-5-one (MIO), which is formed autocatalytically by cyclization and dehydration of residues Ala-Ser-Gly.

The enzyme catalyses L-histidine = trans-urocanate + NH4(+). It functions in the pathway amino-acid degradation; L-histidine degradation into L-glutamate; N-formimidoyl-L-glutamate from L-histidine: step 1/3. The chain is Histidine ammonia-lyase (HAL) from Homo sapiens (Human).